A 218-amino-acid chain; its full sequence is Mitochondrial fission factor (218 aa).

Topologically, residues 1-198 (MAEISRIQYE…ENKERAKREM (198 aa)) are cytoplasmic. Phosphothreonine is present on T89. A phosphoserine mark is found at S129, S131, S146, and S171. Residues 167–198 (VDAASLRRQIIKLNRRLQLLEEENKERAKREM) are a coiled coil. Residues 199–216 (VMYSITVAFWLLNSWLWF) form a helical; Anchor for type IV membrane protein membrane-spanning segment. Topologically, residues 217–218 (RR) are mitochondrial intermembrane.

This sequence belongs to the Tango11 family. Homodimer. Interacts with DNM1L. Interacts with C11orf65/MFI; the interaction inhibits MFF interaction with DNM1L.

The protein resides in the mitochondrion outer membrane. Its subcellular location is the peroxisome. It localises to the cytoplasmic vesicle. It is found in the secretory vesicle. The protein localises to the synaptic vesicle. Its function is as follows. Plays a role in mitochondrial and peroxisomal fission. Promotes the recruitment and association of the fission mediator dynamin-related protein 1 (DNM1L) to the mitochondrial surface. May be involved in regulation of synaptic vesicle membrane dynamics by recruitment of DNM1L to clathrin-containing vesicles. The sequence is that of Mitochondrial fission factor (Mff) from Rattus norvegicus (Rat).